Here is a 345-residue protein sequence, read N- to C-terminus: L-threonine 3-dehydrogenase (345 aa).

C42 lines the Zn(2+) pocket. Residues T44 and H47 each act as charge relay system in the active site. Zn(2+) contacts are provided by H67, E68, C97, C100, C103, and C111. NAD(+) is bound by residues I179, D199, R204, 266–268 (LGI), and 290–291 (IY).

It belongs to the zinc-containing alcohol dehydrogenase family. Homotetramer. The cofactor is Zn(2+).

It localises to the cytoplasm. The enzyme catalyses L-threonine + NAD(+) = (2S)-2-amino-3-oxobutanoate + NADH + H(+). Its pathway is amino-acid degradation; L-threonine degradation via oxydo-reductase pathway; glycine from L-threonine: step 1/2. In terms of biological role, catalyzes the NAD(+)-dependent oxidation of L-threonine to 2-amino-3-ketobutyrate. This is L-threonine 3-dehydrogenase from Rhizobium rhizogenes (strain K84 / ATCC BAA-868) (Agrobacterium radiobacter).